Consider the following 253-residue polypeptide: NAD-dependent protein deacylase 2 (253 aa).

The Deacetylase sirtuin-type domain occupies 1 to 252 (MEDEIRKAAE…VEEVKRLRSE (252 aa)). Residues 23-42 (GAGI…DGLW) and 100-103 (QNID) each bind NAD(+). His118 acts as the Proton acceptor in catalysis. 4 residues coordinate Zn(2+): Cys126, Cys129, Cys150, and Cys153. NAD(+) is bound by residues 191–193 (GSS), 217–219 (NAE), and Ala235.

This sequence belongs to the sirtuin family. Class III subfamily. It depends on Zn(2+) as a cofactor.

Its subcellular location is the cytoplasm. The enzyme catalyses N(6)-acetyl-L-lysyl-[protein] + NAD(+) + H2O = 2''-O-acetyl-ADP-D-ribose + nicotinamide + L-lysyl-[protein]. NAD-dependent protein deacetylase which modulates the activities of several proteins which are inactive in their acetylated form. Deacetylates the N-terminal lysine residue of Alba, the major archaeal chromatin protein and that, in turn, increases Alba's DNA binding affinity, thereby repressing transcription. The chain is NAD-dependent protein deacylase 2 from Archaeoglobus fulgidus (strain ATCC 49558 / DSM 4304 / JCM 9628 / NBRC 100126 / VC-16).